The chain runs to 202 residues: Urease accessory protein UreE (202 aa).

The span at 171–188 (HHGHSHSHDHDHDHDHQH) shows a compositional bias: basic and acidic residues. Positions 171 to 202 (HHGHSHSHDHDHDHDHQHGPGCTHGHRGHDHH) are disordered.

This sequence belongs to the UreE family.

Its subcellular location is the cytoplasm. Involved in urease metallocenter assembly. Binds nickel. Probably functions as a nickel donor during metallocenter assembly. This is Urease accessory protein UreE from Burkholderia ambifaria (strain ATCC BAA-244 / DSM 16087 / CCUG 44356 / LMG 19182 / AMMD) (Burkholderia cepacia (strain AMMD)).